The sequence spans 499 residues: uncharacterized protein (499 aa).

Disordered regions lie at residues 76–118 and 208–268; these read QATA…RLSP and DFET…DWAN. Positions 87–104 are enriched in basic and acidic residues; the sequence is DPEKQTGKSRYHPSEEIR. A compositionally biased stretch (acidic residues) spans 208–263; the sequence is DFETEDDESGDDDSEDTGEDEDEEEWVAILEDEDEDDDDDDDDDEDDDDSDSDESL. Residue S355 is modified to Phosphoserine. A disordered region spans residues 478 to 499; it reads AEGQIRKLLFPKTNQSTQPKPK. Residues 489-499 show a composition bias toward polar residues; that stretch reads KTNQSTQPKPK.

This is an uncharacterized protein from Arabidopsis thaliana (Mouse-ear cress).